The primary structure comprises 209 residues: Ribosomal RNA large subunit methyltransferase E (209 aa).

S-adenosyl-L-methionine-binding residues include glycine 63, tryptophan 65, aspartate 83, aspartate 99, and aspartate 124. Lysine 164 (proton acceptor) is an active-site residue.

Belongs to the class I-like SAM-binding methyltransferase superfamily. RNA methyltransferase RlmE family.

Its subcellular location is the cytoplasm. It carries out the reaction uridine(2552) in 23S rRNA + S-adenosyl-L-methionine = 2'-O-methyluridine(2552) in 23S rRNA + S-adenosyl-L-homocysteine + H(+). In terms of biological role, specifically methylates the uridine in position 2552 of 23S rRNA at the 2'-O position of the ribose in the fully assembled 50S ribosomal subunit. The polypeptide is Ribosomal RNA large subunit methyltransferase E (Shewanella amazonensis (strain ATCC BAA-1098 / SB2B)).